Reading from the N-terminus, the 371-residue chain is 4-hydroxyphenylpyruvate dioxygenase-like protein (371 aa).

VOC domains lie at 7-135 (RLCH…LLQR) and 160-328 (HVDH…VFTK). Fe cation-binding residues include H163, H258, and E339.

The protein belongs to the 4HPPD family. It depends on Fe cation as a cofactor.

It is found in the mitochondrion. The enzyme catalyses 3-(4-hydroxyphenyl)pyruvate + O2 = (S)-4-hydroxymandelate + CO2. Functionally, iron-dependent dioxygenase that catalyzes the conversion of 4-hydroxyphenylpyruvate (4-HPPA) to 4-hydroxymandelate (4-HMA) in the mitochondria, one of the steps in the biosynthesis of coenzyme Q10 from tyrosine. This is 4-hydroxyphenylpyruvate dioxygenase-like protein from Mus musculus (Mouse).